The chain runs to 465 residues: Poly(A) polymerase I (465 aa).

Active-site residues include D80, D82, and D162. Positions 430-465 are disordered; the sequence is APPEQKGMLNELDDDPAPRRRRSRPRKRAPRREGTV. Residues 448 to 459 are compositionally biased toward basic residues; that stretch reads RRRRSRPRKRAP.

The protein belongs to the tRNA nucleotidyltransferase/poly(A) polymerase family.

The catalysed reaction is RNA(n) + ATP = RNA(n)-3'-adenine ribonucleotide + diphosphate. In terms of biological role, adds poly(A) tail to the 3' end of many RNAs, which usually targets these RNAs for decay. Plays a significant role in the global control of gene expression, through influencing the rate of transcript degradation, and in the general RNA quality control. This is Poly(A) polymerase I from Salmonella typhi.